The following is a 546-amino-acid chain: Glucose-6-phosphate isomerase (546 aa).

Glu355 acts as the Proton donor in catalysis. Catalysis depends on residues His386 and Lys510.

This sequence belongs to the GPI family.

It localises to the cytoplasm. It catalyses the reaction alpha-D-glucose 6-phosphate = beta-D-fructose 6-phosphate. Its pathway is carbohydrate biosynthesis; gluconeogenesis. It functions in the pathway carbohydrate degradation; glycolysis; D-glyceraldehyde 3-phosphate and glycerone phosphate from D-glucose: step 2/4. Catalyzes the reversible isomerization of glucose-6-phosphate to fructose-6-phosphate. This Buchnera aphidicola subsp. Cinara cedri (strain Cc) protein is Glucose-6-phosphate isomerase.